A 225-amino-acid polypeptide reads, in one-letter code: tRNA (guanine-N(7)-)-methyltransferase (225 aa).

S-adenosyl-L-methionine-binding residues include Glu-56, Glu-81, Asp-108, and Asp-131. The active site involves Asp-131. Substrate contacts are provided by residues Lys-135, Asp-167, and 204 to 207 (TKFE).

This sequence belongs to the class I-like SAM-binding methyltransferase superfamily. TrmB family.

The enzyme catalyses guanosine(46) in tRNA + S-adenosyl-L-methionine = N(7)-methylguanosine(46) in tRNA + S-adenosyl-L-homocysteine. It participates in tRNA modification; N(7)-methylguanine-tRNA biosynthesis. Catalyzes the formation of N(7)-methylguanine at position 46 (m7G46) in tRNA. The sequence is that of tRNA (guanine-N(7)-)-methyltransferase from Legionella pneumophila (strain Lens).